The sequence spans 473 residues: Protein nucleotidyltransferase YdiU (473 aa).

Glycine 79, glycine 81, arginine 82, lysine 102, aspartate 114, glycine 115, arginine 165, and arginine 172 together coordinate ATP. The active-site Proton acceptor is the aspartate 241. Asparagine 242 and aspartate 251 together coordinate Mg(2+). Aspartate 251 provides a ligand contact to ATP.

It belongs to the SELO family. The cofactor is Mg(2+). Mn(2+) is required as a cofactor.

It carries out the reaction L-seryl-[protein] + ATP = 3-O-(5'-adenylyl)-L-seryl-[protein] + diphosphate. It catalyses the reaction L-threonyl-[protein] + ATP = 3-O-(5'-adenylyl)-L-threonyl-[protein] + diphosphate. The enzyme catalyses L-tyrosyl-[protein] + ATP = O-(5'-adenylyl)-L-tyrosyl-[protein] + diphosphate. The catalysed reaction is L-histidyl-[protein] + UTP = N(tele)-(5'-uridylyl)-L-histidyl-[protein] + diphosphate. It carries out the reaction L-seryl-[protein] + UTP = O-(5'-uridylyl)-L-seryl-[protein] + diphosphate. It catalyses the reaction L-tyrosyl-[protein] + UTP = O-(5'-uridylyl)-L-tyrosyl-[protein] + diphosphate. Functionally, nucleotidyltransferase involved in the post-translational modification of proteins. It can catalyze the addition of adenosine monophosphate (AMP) or uridine monophosphate (UMP) to a protein, resulting in modifications known as AMPylation and UMPylation. This chain is Protein nucleotidyltransferase YdiU, found in Marinomonas sp. (strain MWYL1).